The following is a 188-amino-acid chain: MGGTFDPIHQGHLVAASEVADRFGLDEVIFVPTGQPWQKADEPVSPAEDRYLMTVIATASNPRFQVSRVDIDRGGPTYTIHTLRDLRAEYGAKVQLFFITGADALAKILSWKDLDEVFELAHFIGVTRPGFRLSDAHLPADTVSLVQVPAMAISSTDCRARVSRGEPLWYLVPDGVVQYIAKRRLYQK.

This sequence belongs to the NadD family.

The enzyme catalyses nicotinate beta-D-ribonucleotide + ATP + H(+) = deamido-NAD(+) + diphosphate. It functions in the pathway cofactor biosynthesis; NAD(+) biosynthesis; deamido-NAD(+) from nicotinate D-ribonucleotide: step 1/1. Functionally, catalyzes the reversible adenylation of nicotinate mononucleotide (NaMN) to nicotinic acid adenine dinucleotide (NaAD). This Salinispora arenicola (strain CNS-205) protein is Probable nicotinate-nucleotide adenylyltransferase.